The chain runs to 1006 residues: Phosphatidylinositol-3,5-bisphosphate 3-phosphatase MTMR3 (1006 aa).

Residues 1 to 10 are compositionally biased toward low complexity; it reads MTVTSSAAID. The segment at 1–29 is disordered; sequence MTVTSSAAIDIGGGGGGRRSDRLDSDRTS. Residues 18 to 29 show a composition bias toward basic and acidic residues; the sequence is RRSDRLDSDRTS. Positions 224–630 constitute a Myotubularin phosphatase domain; sequence AWKFSEAVDE…INLRVWHEVF (407 aa). Residues Asn377, Asn402, and Ile403 each contribute to the a 1,2-diacyl-sn-glycero-3-phospho-(1D-myo-inositol-3,5-bisphosphate) site. A 1,2-diacyl-sn-glycero-3-phospho-(1D-myo-inositol-3-phosphate) contacts are provided by Asn377, Asn402, and Ile403. Residue Cys463 is the Phosphocysteine intermediate of the active site. Ser464, Asp465, Gly466, Trp467, Asp468, Arg469, Lys505, and Arg509 together coordinate a 1,2-diacyl-sn-glycero-3-phospho-(1D-myo-inositol-3,5-bisphosphate). 6 residues coordinate a 1,2-diacyl-sn-glycero-3-phospho-(1D-myo-inositol-3-phosphate): Ser464, Asp465, Gly466, Trp467, Asp468, and Arg469. Position 509 (Arg509) interacts with a 1,2-diacyl-sn-glycero-3-phospho-(1D-myo-inositol-3-phosphate). Residues 641–705 are disordered; that stretch reads FSPKEERPLS…PSDNTNSLPM (65 aa). Residues 651–705 are compositionally biased toward polar residues; sequence GCTTPMNTSTSTNLVKSKSSESINSLNVDGSAKESSQQHPTCSTTPSDNTNSLPM. The FYVE-type zinc-finger motif lies at 818-883; it reads EGESGHCAYC…ACDSCYDSMH (66 aa). Residues Cys824, Cys827, Cys845, Cys848, Cys853, Cys856, Cys875, and Cys878 each coordinate Zn(2+). The segment at 886–1006 is disordered; that stretch reads DLKLSSSSTT…DVLDVNEQPL (121 aa). 2 stretches are compositionally biased toward low complexity: residues 890–901 and 913–926; these read SSSSTTTTSSST and DNNS…VSEN. Composition is skewed to basic and acidic residues over residues 933-954 and 976-985; these read VEEK…ETKC and HSRDPLKSID.

This sequence belongs to the protein-tyrosine phosphatase family. Non-receptor class myotubularin subfamily. As to expression, expressed in the body wall muscle and in eggs. Expressed in head neurons. Expressed in the intestine. Expressed in pharyngeal cells, vulval muscle cells and cells of the tail region.

It localises to the cytoplasm. The protein resides in the membrane. It carries out the reaction a 1,2-diacyl-sn-glycero-3-phospho-(1D-myo-inositol-3,5-bisphosphate) + H2O = a 1,2-diacyl-sn-glycero-3-phospho-(1D-myo-inositol-5-phosphate) + phosphate. The enzyme catalyses a 1,2-diacyl-sn-glycero-3-phospho-(1D-myo-inositol-3-phosphate) + H2O = a 1,2-diacyl-sn-glycero-3-phospho-(1D-myo-inositol) + phosphate. It catalyses the reaction 1,2-dihexadecanoyl-sn-glycero-3-phospho-(1D-myo-inositol-3-phosphate) + H2O = 1,2-dihexadecanoyl-sn-glycero-3-phospho-(1D-myo-inositol) + phosphate. The catalysed reaction is 1,2-dihexadecanoyl-sn-glycero-3-phospho-(1D-myo-inositol-3,5-phosphate) + H2O = 1,2-dihexadecanoyl-sn-glycero-3-phospho-(1D-myo-inositol-5-phosphate) + phosphate. It carries out the reaction 1,2-dioctanoyl-sn-glycero-3-phospho-(1-D-myo-inositol-3-phosphate) + H2O = 1,2-dioctanoyl-sn-glycero-3-phospho-(1D-myo-inositol) + phosphate. Its activity is regulated as follows. Inhibited by sodium vanadate and peroxide. In terms of biological role, preferentially dephosphorylates phosphatidylinositol 3-phosphate (PI3P), and has some activity towards phosphatidylinositol 3,5-bisphosphate (PI35P). Positively regulates autophagy and is recruited to autophagosomes by PI3P where it catalyzes PI3P turnover to promote autophagosome maturation. Thought to have a role in maintenance of muscle function. Involved in locomotion and lifespan determination. The sequence is that of Phosphatidylinositol-3,5-bisphosphate 3-phosphatase MTMR3 from Caenorhabditis elegans.